Reading from the N-terminus, the 449-residue chain is Probable glycosyltransferase 5 (449 aa).

The segment covering Met-1–Arg-14 has biased composition (basic and acidic residues). The interval Met-1–Cys-24 is disordered. The Cytoplasmic portion of the chain corresponds to Met-1–Asp-28. Residues Ala-29 to Pro-49 form a helical; Signal-anchor for type II membrane protein membrane-spanning segment. The Lumenal segment spans residues Thr-50–Thr-449. The segment at Ala-74–Tyr-109 is disordered. 3 N-linked (GlcNAc...) asparagine glycosylation sites follow: Asn-89, Asn-413, and Asn-422.

This sequence belongs to the glycosyltransferase 34 family.

It localises to the golgi apparatus membrane. Its function is as follows. Probable glycosyltransferase that may be involved in the biosynthesis of xyloglucan. The chain is Probable glycosyltransferase 5 from Oryza sativa subsp. japonica (Rice).